The following is an 869-amino-acid chain: MAGCRGSLCCCCRWCCCCGERETRTPEELTILGETQEEEDEILPRKDYESLDYDRCINDPYLEVLETMDNKKGRRYEAVKWMVVFAIGVCTGLVGLFVDFFVRLFTQLKFGVVQTSVEECSQKGCLALSLLELLGFNLTFVFLASLLVLIEPVAAGSGIPEVKCYLNGVKVPGIVRLRTLLCKVLGVLFSVAGGLFVEKEGPMIHSGSVVGAGLPQFQSISLRKIQFNFPYFRSDRDKRDFVSAGAAAGVAAAFGAPIGGTLFSLEEGSSFWNQGLTWKVLFCSMSATFTLNFFRSGIQFGSWGSFQLPGLLNFGEFKCSDSDKKCHLWTAMDLGFFVVMGVIGGLLGATFNCLNKRLAKYRMRNVHPKPKLVRVLESLLVSLVTTVVVFVASMVLGECRQMSSSSQIGNDSFQLQVTEDVNSSIKTFFCPNDTYNDMATLFFNPQESAILQLFHQDGTFSPVTLALFFVLYFLLACWTYGISVPSGLFVPSLLCGAAFGRLVANVLKSYIGLGHIYSGTFALIGAAAFLGGVVRMTISLTVILIESTNEITYGLPIMVTLMVAKWTGDFFNKGIYDIHVGLRGVPLLEWETEVEMDKLRASDIMEPNLTYVYPHTRIQSLVSILRTTVHHAFPVVTENRGNEKEFMKGNQLISNNIKFKKSSILTRAGEQRKRSQSMKSYPSSELRNMCDEHIASEEPAEKEDLLQQMLERRYTPYPNLYPDQSPSEDWTMEERFRPLTFHGLILRSQLVTLLVRGVCYSESQSSASQPRLSYAEMAEDYPRYPDIHDLDLTLLNPRMIVDVTPYMNPSPFTVSPNTHVSQVFNLFRTMGLRHLPVVNAVGEIVGIITRHNLTYEFLQARLRQHYQTI.

Residues M1 to K80 lie on the Cytoplasmic side of the membrane. The next 2 helical transmembrane spans lie at W81–V113 and L128–I150. The Selectivity filter part_1 signature appears at G156–P160. S157 is a chloride binding site. The segment at residues I159–L166 is an intramembrane region (helical). 2 helical membrane passes run R176–G194 and E200–F217. The Selectivity filter part_2 motif lies at E198 to P202. 2 consecutive intramembrane regions (helical) follow at residues F241–A253 and P257–L265. 3 helical membrane-spanning segments follow: residues T277–F294, G335–R364, and K371–A392. N-linked (GlcNAc...) asparagine glycosylation is found at N410, N422, and N432. A run of 2 helical transmembrane segments spans residues P462–G481 and G487–I511. The Selectivity filter part_3 motif lies at G487 to P491. F489 contributes to the chloride binding site. Residues G519–V533 constitute an intramembrane region (helical). Residues V534 to M536 constitute an intramembrane region (note=Loop between two helices). The segment at residues T537–T548 is an intramembrane region (helical). Positions N549–T552 form an intramembrane region, note=Loop between two helices. Residues Y553 to F571 form a helical membrane-spanning segment. Residues N572 to I869 lie on the Cytoplasmic side of the membrane. Position 576 (Y576) interacts with chloride. Residues M605–S662 form the CBS 1 domain. H630 to A632 provides a ligand contact to ATP. The residue at position 773 (S773) is a Phosphoserine. A CBS 2 domain is found at M807–T868. Position 849–852 (T849–N852) interacts with ATP.

This sequence belongs to the chloride channel (TC 2.A.49) family. ClC-6/CLCN6 subfamily. Post-translationally, N-glycosylated on several asparagine residues. Testis, ovary, small intestine, brain and skeletal muscle. Low level expression in aortic and coronary vascular smooth muscle cells, and aortic endothelial cells. Isoform 3 is only detected in kidney.

Its subcellular location is the late endosome membrane. The catalysed reaction is 2 chloride(in) + H(+)(out) = 2 chloride(out) + H(+)(in). Functionally, voltage-gated channel mediating the exchange of chloride ions against protons. Functions as antiporter and contributes to the acidification of the late endosome lumen. The CLC channel family contains both chloride channels and proton-coupled anion transporters that exchange chloride or another anion for protons. The presence of conserved gating glutamate residues is typical for family members that function as antiporters. The protein is H(+)/Cl(-) exchange transporter 6 of Homo sapiens (Human).